Consider the following 490-residue polypeptide: Betaine aldehyde dehydrogenase (490 aa).

K(+) is bound at residue Asp93. Gly150 to Trp152 is a binding site for NAD(+). Lys162 (charge relay system) is an active-site residue. Lys176–Glu179 is an NAD(+) binding site. Residue Val180 coordinates K(+). An NAD(+)-binding site is contributed by Gly230 to Ser233. Leu246 is a K(+) binding site. The Proton acceptor role is filled by Glu252. NAD(+) contacts are provided by Gly254, Cys286, and Glu387. The active-site Nucleophile is Cys286. Cys286 carries the cysteine sulfenic acid (-SOH) modification. Positions 457 and 460 each coordinate K(+). The active-site Charge relay system is the Glu464.

It belongs to the aldehyde dehydrogenase family. In terms of assembly, dimer of dimers. The cofactor is K(+).

It catalyses the reaction betaine aldehyde + NAD(+) + H2O = glycine betaine + NADH + 2 H(+). It functions in the pathway amine and polyamine biosynthesis; betaine biosynthesis via choline pathway; betaine from betaine aldehyde: step 1/1. Involved in the biosynthesis of the osmoprotectant glycine betaine. Catalyzes the irreversible oxidation of betaine aldehyde to the corresponding acid. The protein is Betaine aldehyde dehydrogenase of Pectobacterium atrosepticum (strain SCRI 1043 / ATCC BAA-672) (Erwinia carotovora subsp. atroseptica).